Consider the following 575-residue polypeptide: Electron transfer flavoprotein-ubiquinone oxidoreductase, mitochondrial (575 aa).

A mitochondrion-targeting transit peptide spans Met-1–Leu-33. Position 44–58 (Val-44–Ile-58) interacts with FAD. An intramembrane segment occupies Val-82–Lys-103. Residues Gly-276 and Gly-277 each contribute to the a ubiquinone site. The stretch at Ile-343–Val-363 is an intramembrane region. Positions 520, 544, 547, and 550 each coordinate [4Fe-4S] cluster. In terms of domain architecture, 4Fe-4S ferredoxin-type spans Gln-535 to Pro-564.

This sequence belongs to the ETF-QO/FixC family. [4Fe-4S] cluster is required as a cofactor. FAD serves as cofactor.

The protein resides in the mitochondrion inner membrane. It carries out the reaction a ubiquinone + reduced [electron-transfer flavoprotein] = a ubiquinol + oxidized [electron-transfer flavoprotein] + H(+). In terms of biological role, accepts electrons from ETF and reduces ubiquinone. This Oryza sativa subsp. japonica (Rice) protein is Electron transfer flavoprotein-ubiquinone oxidoreductase, mitochondrial.